Consider the following 513-residue polypeptide: Trigger factor (513 aa).

The PPIase FKBP-type domain occupies 164-249; the sequence is GDQIIIDFLG…VKAVKNAGEF (86 aa). A disordered region spans residues 436 to 513; it reads QAAIEAEEGA…KAPAKKKAEG (78 aa). Over residues 452-461 the composition is skewed to basic residues; that stretch reads AKKAPAKKKA. Low complexity predominate over residues 489–498; sequence ADEAPAAEEA. Basic residues predominate over residues 501–513; the sequence is AKKKAPAKKKAEG.

The protein belongs to the FKBP-type PPIase family. Tig subfamily.

The protein localises to the cytoplasm. The catalysed reaction is [protein]-peptidylproline (omega=180) = [protein]-peptidylproline (omega=0). In terms of biological role, involved in protein export. Acts as a chaperone by maintaining the newly synthesized protein in an open conformation. Functions as a peptidyl-prolyl cis-trans isomerase. In Novosphingobium aromaticivorans (strain ATCC 700278 / DSM 12444 / CCUG 56034 / CIP 105152 / NBRC 16084 / F199), this protein is Trigger factor.